A 240-amino-acid polypeptide reads, in one-letter code: Allene oxide cyclase, chloroplastic (240 aa).

The transit peptide at 1-49 (MAAAAPSRVSVRAAAPGQTGGFAKIRPQVVVAAAARSAGVSGRRARSVR) directs the protein to the chloroplast.

This sequence belongs to the allene oxide cyclase family.

It localises to the plastid. It is found in the chloroplast. The catalysed reaction is (9Z,13S,15Z)-12,13-epoxyoctadeca-9,11,15-trienoate = (9S,13S,15Z)-12-oxophyto-10,15-dienoate. Its pathway is lipid metabolism; polyunsaturated fatty acid biosynthesis. Functionally, involved in the production of 12-oxo-phytodienoic acid (OPDA), a precursor of jasmonic acid (JA). Required for the production of JA in response to wounding. Necessary for flower and coleoptile development regulation by light, including blue (BL), red (RL) and far red (FR) lights. Involved in the auxin-mediated signaling pathway leading to growth stimulation. Essential for photodestruction of phyA upon activation by RL and FR. Implicated in responses to salt stress (NaCl). In terms of biological role, confers resistance to incompatible strains of the blast fungus Magnaporthe grisea, jasmonic acid (JA) thus playing a significant role in the resistance to fungal infection. Implicated in riboflavin-induced resistance to the sheath blight Rhizoctonia solani. Required for Pseudomonas fluorescens-mediated JA-dependent induced systemic resistance (ISR). Confers some resistance, independently of the JA pathway but probably via OPDA accumulation, to brown planthopper (BPH, Nilaparvata lugens), a destructive, monophagous, piercing-sucking insect, mainly by reducing its feeding activity and survival rate. Triggers resistance to the chewing insect striped stem borer (SSB) Chilo suppressalis, to the root hemiparasite witchweed Striga hermonthica, and to the root feeder insect rice water weevil Lissorhoptrus oryzophilus, in a JA-dependent manner, by attenuating both the growth mass and growth rate of caterpillars. This is Allene oxide cyclase, chloroplastic from Oryza sativa subsp. indica (Rice).